The primary structure comprises 242 residues: Segregation and condensation protein A (242 aa).

The protein belongs to the ScpA family. As to quaternary structure, component of a cohesin-like complex composed of ScpA, ScpB and the Smc homodimer, in which ScpA and ScpB bind to the head domain of Smc. The presence of the three proteins is required for the association of the complex with DNA.

The protein resides in the cytoplasm. Functionally, participates in chromosomal partition during cell division. May act via the formation of a condensin-like complex containing Smc and ScpB that pull DNA away from mid-cell into both cell halves. This chain is Segregation and condensation protein A, found in Lactococcus lactis subsp. cremoris (strain SK11).